The chain runs to 120 residues: NAD(P)H-quinone oxidoreductase subunit 3, chloroplastic (120 aa).

Transmembrane regions (helical) follow at residues 9–29 (IFWA…LISG), 64–84 (MFAL…PWAM), and 88–108 (VLGV…IVGS).

Belongs to the complex I subunit 3 family. NDH is composed of at least 16 different subunits, 5 of which are encoded in the nucleus.

It localises to the plastid. The protein localises to the chloroplast thylakoid membrane. The enzyme catalyses a plastoquinone + NADH + (n+1) H(+)(in) = a plastoquinol + NAD(+) + n H(+)(out). It carries out the reaction a plastoquinone + NADPH + (n+1) H(+)(in) = a plastoquinol + NADP(+) + n H(+)(out). Functionally, NDH shuttles electrons from NAD(P)H:plastoquinone, via FMN and iron-sulfur (Fe-S) centers, to quinones in the photosynthetic chain and possibly in a chloroplast respiratory chain. The immediate electron acceptor for the enzyme in this species is believed to be plastoquinone. Couples the redox reaction to proton translocation, and thus conserves the redox energy in a proton gradient. In Amborella trichopoda, this protein is NAD(P)H-quinone oxidoreductase subunit 3, chloroplastic.